Here is a 187-residue protein sequence, read N- to C-terminus: MTQLKNPVLMATIGAAQGLRGEVRVKSFTDDPTALGDYGNLHSEDGRVFEVLEIREAKNVVVVRFRGVNDRTAAEALNGLELFIERDNLPDDDLDEDEFFYADLEGMEAVDRTGKSYGSVTGVFDFGAGDLLELKGPGLRPVLIPFTEWSVLEIDLEAGKLVIDPTAAGLVDDEKSGPGKPFPTKRK.

The PRC barrel domain maps to 96-169; sequence EDEFFYADLE…KLVIDPTAAG (74 aa).

The protein belongs to the RimM family. Binds ribosomal protein uS19.

It is found in the cytoplasm. Its function is as follows. An accessory protein needed during the final step in the assembly of 30S ribosomal subunit, possibly for assembly of the head region. Essential for efficient processing of 16S rRNA. May be needed both before and after RbfA during the maturation of 16S rRNA. It has affinity for free ribosomal 30S subunits but not for 70S ribosomes. This is Ribosome maturation factor RimM from Sinorhizobium medicae (strain WSM419) (Ensifer medicae).